Consider the following 215-residue polypeptide: Recombination protein RecR (215 aa).

The C4-type zinc-finger motif lies at 74–89 (CQRCGHLSADPICDIC). The region spanning 97–191 (GVICVVADSR…RVTRIAYGLP (95 aa)) is the Toprim domain.

It belongs to the RecR family.

May play a role in DNA repair. It seems to be involved in an RecBC-independent recombinational process of DNA repair. It may act with RecF and RecO. The chain is Recombination protein RecR from Synechococcus sp. (strain RCC307).